The sequence spans 179 residues: Large ribosomal subunit protein uL5 (179 aa).

The protein belongs to the universal ribosomal protein uL5 family. Part of the 50S ribosomal subunit; part of the 5S rRNA/L5/L18/L25 subcomplex. Contacts the 5S rRNA and the P site tRNA. Forms a bridge to the 30S subunit in the 70S ribosome.

Functionally, this is one of the proteins that bind and probably mediate the attachment of the 5S RNA into the large ribosomal subunit, where it forms part of the central protuberance. In the 70S ribosome it contacts protein S13 of the 30S subunit (bridge B1b), connecting the 2 subunits; this bridge is implicated in subunit movement. Contacts the P site tRNA; the 5S rRNA and some of its associated proteins might help stabilize positioning of ribosome-bound tRNAs. This Syntrophus aciditrophicus (strain SB) protein is Large ribosomal subunit protein uL5.